Reading from the N-terminus, the 380-residue chain is 3-dehydroquinate synthase (380 aa).

This sequence belongs to the archaeal-type DHQ synthase family.

It carries out the reaction 2-amino-2,3,7-trideoxy-D-lyxo-hept-6-ulosonate + NAD(+) + H2O = 3-dehydroquinate + NH4(+) + NADH + H(+). Catalyzes the oxidative deamination and cyclization of 2-amino-3,7-dideoxy-D-threo-hept-6-ulosonic acid (ADH) to yield 3-dehydroquinate (DHQ), which is fed into the canonical shikimic pathway of aromatic amino acid biosynthesis. This Methanosarcina acetivorans (strain ATCC 35395 / DSM 2834 / JCM 12185 / C2A) protein is 3-dehydroquinate synthase.